The chain runs to 425 residues: Glutamate-1-semialdehyde 2,1-aminomutase (425 aa).

Lysine 265 carries the N6-(pyridoxal phosphate)lysine modification.

Belongs to the class-III pyridoxal-phosphate-dependent aminotransferase family. HemL subfamily. In terms of assembly, homodimer. Requires pyridoxal 5'-phosphate as cofactor.

The protein localises to the cytoplasm. The enzyme catalyses (S)-4-amino-5-oxopentanoate = 5-aminolevulinate. It participates in porphyrin-containing compound metabolism; protoporphyrin-IX biosynthesis; 5-aminolevulinate from L-glutamyl-tRNA(Glu): step 2/2. This is Glutamate-1-semialdehyde 2,1-aminomutase from Clostridium perfringens (strain SM101 / Type A).